The primary structure comprises 101 residues: Small ribosomal subunit protein uS14A (101 aa).

Composition is skewed to basic and acidic residues over residues 28–44 and 61–70; these read KETI…RAEA and RNRDAADGRP. The segment at 28 to 74 is disordered; the sequence is KETIRRPSSSEDERAEARAALQRLPRDASPVRLRNRDAADGRPRGHL.

Belongs to the universal ribosomal protein uS14 family. As to quaternary structure, part of the 30S ribosomal subunit. Contacts proteins S3 and S10.

Its function is as follows. Binds 16S rRNA, required for the assembly of 30S particles and may also be responsible for determining the conformation of the 16S rRNA at the A site. In Rhodococcus jostii (strain RHA1), this protein is Small ribosomal subunit protein uS14A.